The sequence spans 209 residues: NADH-ubiquinone oxidoreductase subunit 9 (209 aa).

This sequence belongs to the complex I 30 kDa subunit family. Complex I is composed of about 45 different subunits.

It is found in the mitochondrion inner membrane. It catalyses the reaction a ubiquinone + NADH + 5 H(+)(in) = a ubiquinol + NAD(+) + 4 H(+)(out). Functionally, core subunit of the mitochondrial membrane respiratory chain NADH dehydrogenase (Complex I) that is believed to belong to the minimal assembly required for catalysis. Complex I functions in the transfer of electrons from NADH to the respiratory chain. The immediate electron acceptor for the enzyme is believed to be ubiquinone. The sequence is that of NADH-ubiquinone oxidoreductase subunit 9 (nad9) from Dictyostelium discoideum (Social amoeba).